We begin with the raw amino-acid sequence, 334 residues long: Beta-ketoacyl-[acyl-carrier-protein] synthase III (334 aa).

Catalysis depends on residues C114 and H260. An ACP-binding region spans residues 261–265 (QANLR). Residue N290 is part of the active site.

The protein belongs to the thiolase-like superfamily. FabH family. In terms of assembly, homodimer.

The protein localises to the cytoplasm. It carries out the reaction malonyl-[ACP] + acetyl-CoA + H(+) = 3-oxobutanoyl-[ACP] + CO2 + CoA. It functions in the pathway lipid metabolism; fatty acid biosynthesis. Functionally, catalyzes the condensation reaction of fatty acid synthesis by the addition to an acyl acceptor of two carbons from malonyl-ACP. Catalyzes the first condensation reaction which initiates fatty acid synthesis and may therefore play a role in governing the total rate of fatty acid production. Possesses both acetoacetyl-ACP synthase and acetyl transacylase activities. Its substrate specificity determines the biosynthesis of branched-chain and/or straight-chain of fatty acids. The protein is Beta-ketoacyl-[acyl-carrier-protein] synthase III of Clostridium tetani (strain Massachusetts / E88).